The primary structure comprises 958 residues: Valine--tRNA ligase (958 aa).

The short motif at 45-55 is the 'HIGH' region element; that stretch reads PNVTGSLHMGH. Residues 571–575 carry the 'KMSKS' region motif; the sequence is KMSKS. An ATP-binding site is contributed by lysine 574. A coiled-coil region spans residues 892-958; sequence AAERTRLDKE…EALERLKQAS (67 aa).

Belongs to the class-I aminoacyl-tRNA synthetase family. ValS type 1 subfamily. Monomer.

The protein localises to the cytoplasm. It carries out the reaction tRNA(Val) + L-valine + ATP = L-valyl-tRNA(Val) + AMP + diphosphate. Catalyzes the attachment of valine to tRNA(Val). As ValRS can inadvertently accommodate and process structurally similar amino acids such as threonine, to avoid such errors, it has a 'posttransfer' editing activity that hydrolyzes mischarged Thr-tRNA(Val) in a tRNA-dependent manner. The chain is Valine--tRNA ligase from Bradyrhizobium diazoefficiens (strain JCM 10833 / BCRC 13528 / IAM 13628 / NBRC 14792 / USDA 110).